The following is a 60-amino-acid chain: Large ribosomal subunit protein uL30 (60 aa).

The protein belongs to the universal ribosomal protein uL30 family. As to quaternary structure, part of the 50S ribosomal subunit.

The polypeptide is Large ribosomal subunit protein uL30 (Desulfotalea psychrophila (strain LSv54 / DSM 12343)).